A 138-amino-acid chain; its full sequence is MATRTQARGAVIELLYAFESGNEEIKKIAPSMLEEKKIKNNQLAFALSLFNGVLEKINEIDALIEPHLKDWDFKRLGSMEKAILRLGAYEIGFTPTQNPIIINECIELGKLYAEPNTPKFLNAILDSLSKKLAQKPLT.

The protein belongs to the NusB family.

Its function is as follows. Involved in transcription antitermination. Required for transcription of ribosomal RNA (rRNA) genes. Binds specifically to the boxA antiterminator sequence of the ribosomal RNA (rrn) operons. The chain is Transcription antitermination protein NusB from Helicobacter acinonychis (strain Sheeba).